The sequence spans 118 residues: Large ribosomal subunit protein bL20 (118 aa).

It belongs to the bacterial ribosomal protein bL20 family.

In terms of biological role, binds directly to 23S ribosomal RNA and is necessary for the in vitro assembly process of the 50S ribosomal subunit. It is not involved in the protein synthesizing functions of that subunit. The protein is Large ribosomal subunit protein bL20 of Alteromonas mediterranea (strain DSM 17117 / CIP 110805 / LMG 28347 / Deep ecotype).